The sequence spans 669 residues: DNA ligase (669 aa).

Residues 33–37 (DAEYD), 82–83 (SL), and Glu114 each bind NAD(+). Catalysis depends on Lys116, which acts as the N6-AMP-lysine intermediate. NAD(+) is bound by residues Arg137, Glu174, Lys291, and Lys315. Positions 409, 412, 427, and 433 each coordinate Zn(2+). The 77-residue stretch at 593-669 (EIPQPLAGKV…QTEQDLLALL (77 aa)) folds into the BRCT domain.

Belongs to the NAD-dependent DNA ligase family. LigA subfamily. The cofactor is Mg(2+). Mn(2+) is required as a cofactor.

The enzyme catalyses NAD(+) + (deoxyribonucleotide)n-3'-hydroxyl + 5'-phospho-(deoxyribonucleotide)m = (deoxyribonucleotide)n+m + AMP + beta-nicotinamide D-nucleotide.. In terms of biological role, DNA ligase that catalyzes the formation of phosphodiester linkages between 5'-phosphoryl and 3'-hydroxyl groups in double-stranded DNA using NAD as a coenzyme and as the energy source for the reaction. It is essential for DNA replication and repair of damaged DNA. This chain is DNA ligase, found in Vibrio vulnificus (strain YJ016).